The primary structure comprises 266 residues: Phosphatidylglycerol--prolipoprotein diacylglyceryl transferase (266 aa).

7 consecutive transmembrane segments (helical) span residues 17 to 37, 56 to 76, 92 to 112, 120 to 140, 171 to 191, 199 to 219, and 233 to 253; these read LKIH…WLLA, LVFW…VLFY, WKGG…VWWF, FFQL…AGRI, PSQL…LWLF, ASVS…VEFV, and WLTM…ALMV. Arg-139 is an a 1,2-diacyl-sn-glycero-3-phospho-(1'-sn-glycerol) binding site.

The protein belongs to the Lgt family.

The protein resides in the cell inner membrane. It catalyses the reaction L-cysteinyl-[prolipoprotein] + a 1,2-diacyl-sn-glycero-3-phospho-(1'-sn-glycerol) = an S-1,2-diacyl-sn-glyceryl-L-cysteinyl-[prolipoprotein] + sn-glycerol 1-phosphate + H(+). Its pathway is protein modification; lipoprotein biosynthesis (diacylglyceryl transfer). Its function is as follows. Catalyzes the transfer of the diacylglyceryl group from phosphatidylglycerol to the sulfhydryl group of the N-terminal cysteine of a prolipoprotein, the first step in the formation of mature lipoproteins. In Pseudomonas aeruginosa (strain UCBPP-PA14), this protein is Phosphatidylglycerol--prolipoprotein diacylglyceryl transferase.